A 160-amino-acid chain; its full sequence is Putative oxygenase ATEG_00330 (160 aa).

In terms of domain architecture, EthD spans 24 to 100 (HYFGTALHAK…RNIAADPEFA (77 aa)).

It belongs to the tpcK family.

Its function is as follows. Putative oxygenase; part of the gene cluster that mediates the biosynthesis of isoflavipucine. The PKS part of the PKS-NRPS ATEG_00325 probably assembles a triketide from an acetyl starter and two malonyl-CoA extender units. The poly-beta-keto intermediate would then be fused to the leucine unit by the NRPS part. The resulting amide would be liberated from the PKS-NRPS through reductive release of the linear PKS-NRPS product from the enzyme complex. Further steps in isoflapucine synthesis include a cyclization step, an oxidation step, a hydrolysis step involving a trans-amidation, and an additional oxidation step, leading to flavipucine. Formation of isoflavipucine from flavipucine requires an unusual rearrangement. Alternative rearrangement reactions could build up rubrobramide, representing a branching of flavipucine biosynthesis. The enzymes involved in the post-PKS-NRPS steps have not been identified yet, but the putative oxygenases ATEG_003329 and ATEG_00330 encoded by the cluster could play a role. This chain is Putative oxygenase ATEG_00330, found in Aspergillus terreus (strain NIH 2624 / FGSC A1156).